A 115-amino-acid chain; its full sequence is MRIYINEIKLKDDGVYCFSEESTEGLEEVGQMLVDSDNYGFAYLLDDGQSYSYLIFVQETWSMLHENRDKRIIINNHLELKHFQEELDYVLNNIEGNNNYGKEFVSAVEKTFELE.

This sequence belongs to the UPF0738 family.

This chain is UPF0738 protein SE_0694, found in Staphylococcus epidermidis (strain ATCC 12228 / FDA PCI 1200).